A 350-amino-acid chain; its full sequence is MERILEKVRAKSEIPVYDKSIENVLSAILTTNDFWKIVDLSEEPLPLVADIIRILEEEGLVKISNGIEFTEKGNEFIKSYGIGAKDNSVCECCEGRGVSLKNYQDLLERFKEIVKNRPMPKHEYDQGFVTPECTISRIALMNSRGDLFNKDVLVLGDDDLTSIALMLSNLPKKIVVVDIDDRLINFIKEVAEQLNYKNIEVITLDLRKPLPEKYSRAFDTFITDPPETVYAVKTFIGRGISALKGERRAGYFGITRRESSLDKWREIQRTLINDFNVVITDIIRNFNHYVNWGYEEETRAWKLAPVKKKPEDIWYKSYMFRIETLKDSRGFEEEVDVGDELYNDAESSTT.

Belongs to the branched-chain polyamine synthase family.

Its subcellular location is the cytoplasm. It carries out the reaction 2 S-adenosyl 3-(methylsulfanyl)propylamine + spermidine = N(4)-bis(aminopropyl)spermidine + 2 S-methyl-5'-thioadenosine + 2 H(+). It participates in amine and polyamine biosynthesis. In terms of biological role, involved in the biosynthesis of branched-chain polyamines, which support the growth of thermophiles under high-temperature conditions. Catalyzes the sequential condensation of spermidine with the aminopropyl groups of decarboxylated S-adenosylmethionines to produce N(4)-bis(aminopropyl)spermidine via N(4)-aminopropylspermidine. This Methanocaldococcus jannaschii (strain ATCC 43067 / DSM 2661 / JAL-1 / JCM 10045 / NBRC 100440) (Methanococcus jannaschii) protein is N(4)-bis(aminopropyl)spermidine synthase.